A 372-amino-acid chain; its full sequence is Probable arabinan endo-1,5-alpha-L-arabinosidase B (372 aa).

The first 16 residues, Met-1 to Cys-16, serve as a signal peptide directing secretion. Low complexity predominate over residues Ser-23–Glu-34. Residues Ser-23–Ala-52 form a disordered region. Residue Asp-59 is the Proton acceptor of the active site. A glycan (N-linked (GlcNAc...) asparagine) is linked at Asn-120. Glu-252 acts as the Proton donor in catalysis. Asn-363 carries an N-linked (GlcNAc...) asparagine glycan.

This sequence belongs to the glycosyl hydrolase 43 family.

Its subcellular location is the secreted. It catalyses the reaction Endohydrolysis of (1-&gt;5)-alpha-arabinofuranosidic linkages in (1-&gt;5)-arabinans.. It participates in glycan metabolism; L-arabinan degradation. In terms of biological role, endo-1,5-alpha-L-arabinanase involved in degradation of pectin. Its preferred substrate is linear 1,5-alpha-L-arabinan. This is Probable arabinan endo-1,5-alpha-L-arabinosidase B (abnB) from Aspergillus fumigatus (strain ATCC MYA-4609 / CBS 101355 / FGSC A1100 / Af293) (Neosartorya fumigata).